We begin with the raw amino-acid sequence, 290 residues long: Lipoyl synthase (290 aa).

[4Fe-4S] cluster is bound by residues cysteine 38, cysteine 43, cysteine 49, cysteine 64, cysteine 68, cysteine 71, and serine 277. Residues 50 to 266 (WSKGTATFLL…REIALDAGFR (217 aa)) enclose the Radical SAM core domain.

Belongs to the radical SAM superfamily. Lipoyl synthase family. Requires [4Fe-4S] cluster as cofactor.

It localises to the cytoplasm. The enzyme catalyses [[Fe-S] cluster scaffold protein carrying a second [4Fe-4S](2+) cluster] + N(6)-octanoyl-L-lysyl-[protein] + 2 oxidized [2Fe-2S]-[ferredoxin] + 2 S-adenosyl-L-methionine + 4 H(+) = [[Fe-S] cluster scaffold protein] + N(6)-[(R)-dihydrolipoyl]-L-lysyl-[protein] + 4 Fe(3+) + 2 hydrogen sulfide + 2 5'-deoxyadenosine + 2 L-methionine + 2 reduced [2Fe-2S]-[ferredoxin]. It participates in protein modification; protein lipoylation via endogenous pathway; protein N(6)-(lipoyl)lysine from octanoyl-[acyl-carrier-protein]: step 2/2. Its function is as follows. Catalyzes the radical-mediated insertion of two sulfur atoms into the C-6 and C-8 positions of the octanoyl moiety bound to the lipoyl domains of lipoate-dependent enzymes, thereby converting the octanoylated domains into lipoylated derivatives. The polypeptide is Lipoyl synthase (Chlorobaculum tepidum (strain ATCC 49652 / DSM 12025 / NBRC 103806 / TLS) (Chlorobium tepidum)).